Reading from the N-terminus, the 127-residue chain is Small ribosomal subunit protein bS6 (127 aa).

Residues 106–117 (ERKAQSEKKEAE) show a composition bias toward basic and acidic residues. Residues 106–127 (ERKAQSEKKEAEVSEGEGGTEA) are disordered. A compositionally biased stretch (acidic residues) spans 118–127 (VSEGEGGTEA).

The protein belongs to the bacterial ribosomal protein bS6 family.

Binds together with bS18 to 16S ribosomal RNA. This Thermotoga neapolitana (strain ATCC 49049 / DSM 4359 / NBRC 107923 / NS-E) protein is Small ribosomal subunit protein bS6.